The primary structure comprises 362 residues: Homeobox protein Nkx-2.3 (362 aa).

Disordered regions lie at residues 126–149 (EAAG…RKPR) and 203–222 (QRQD…PPRR). A compositionally biased stretch (basic and acidic residues) spans 132 to 141 (KTSEDGERPK). Positions 145–204 (RRKPRVLFSQAQVFELERRFKQQRYLSAPEREHLASSLKLTSTQVKIWFQNRRYKCKRQR) form a DNA-binding region, homeobox.

This sequence belongs to the NK-2 homeobox family. As to expression, expressed in spleen and intestine. Also expressed in salivary gland and tongue.

Its subcellular location is the nucleus. Its function is as follows. Transcriptional regulator essential for normal development and functions of the small intestine and spleen. Activates directly MADCAM1 expression. Required for homing of lymphocytes in spleen and mucosa-associated lymphoid tissue. May have a role during pharyngeal organogenesis. This Mus musculus (Mouse) protein is Homeobox protein Nkx-2.3 (Nkx2-3).